The primary structure comprises 127 residues: Small ribosomal subunit protein eS8 (127 aa).

The interval 1–24 (MKWQGKSARKPTGGRLVPARGKRK) is disordered.

It belongs to the eukaryotic ribosomal protein eS8 family. Part of the 30S ribosomal subunit.

This Methanothrix thermoacetophila (strain DSM 6194 / JCM 14653 / NBRC 101360 / PT) (Methanosaeta thermophila) protein is Small ribosomal subunit protein eS8.